Here is a 303-residue protein sequence, read N- to C-terminus: Formylglycine-generating enzyme (303 aa).

8 residues coordinate Ca(2+): asparagine 188, isoleucine 189, aspartate 202, tyrosine 204, asparagine 222, valine 223, glycine 225, and valine 227. 2 residues coordinate Cu(+): cysteine 269 and cysteine 274.

Belongs to the sulfatase-modifying factor family. The cofactor is Cu(+).

The enzyme catalyses L-cysteinyl-[sulfatase] + 2 a thiol + O2 = an organic disulfide + 3-oxo-L-alanyl-[sulfatase] + hydrogen sulfide + H2O + H(+). It functions in the pathway protein modification; sulfatase oxidation. In terms of biological role, oxidase that catalyzes the conversion of cysteine to 3-oxoalanine on target proteins. 3-oxoalanine modification, which is also named formylglycine (fGly), occurs in the maturation of arylsulfatases and some alkaline phosphatases that use the hydrated form of 3-oxoalanine as a catalytic nucleophile. The polypeptide is Formylglycine-generating enzyme (Thermomonospora curvata (strain ATCC 19995 / DSM 43183 / JCM 3096 / KCTC 9072 / NBRC 15933 / NCIMB 10081 / Henssen B9)).